The following is a 315-amino-acid chain: Calumenin (315 aa).

Residues Met-1–Ser-19 form the signal peptide. Ser-44 carries the post-translational modification Phosphoserine. Position 47 is a phosphotyrosine (Tyr-47). Position 65 is a phosphothreonine (Thr-65). 6 EF-hand domains span residues Glu-68 to Arg-103, Trp-104 to Asp-139, Gln-151 to Asp-186, Met-188 to Asn-223, Trp-229 to Asp-264, and His-265 to Ser-300. Residue Ser-69 is modified to Phosphoserine. Ca(2+) contacts are provided by Asp-81, Asp-83, Asp-85, Glu-92, Asp-117, Asn-119, Asp-121, and Glu-128. N-linked (GlcNAc...) asparagine glycosylation is present at Asn-131. Asp-164 is a Ca(2+) binding site. An N6-acetyllysine modification is found at Lys-165. Residues Asp-166, Asp-168, Glu-175, Asp-201, Asn-203, Asp-205, Glu-212, Asp-242, Asn-244, Asp-246, Lys-248, and Glu-253 each contribute to the Ca(2+) site. The residue at position 254 (Thr-254) is a Phosphothreonine. Residues Ser-261 and Ser-277 each carry the phosphoserine modification. Asp-278, Asn-280, Asp-282, Lys-284, and Glu-289 together coordinate Ca(2+). The short motif at His-312–Phe-315 is the Prevents secretion from ER element.

The protein belongs to the CREC family. As to quaternary structure, interacts with GGCX.

It localises to the endoplasmic reticulum membrane. Its subcellular location is the golgi apparatus. The protein localises to the secreted. It is found in the melanosome. The protein resides in the sarcoplasmic reticulum lumen. Its function is as follows. Involved in regulation of vitamin K-dependent carboxylation of multiple N-terminal glutamate residues. Seems to inhibit gamma-carboxylase GGCX. Binds 7 calcium ions with a low affinity. This Pongo abelii (Sumatran orangutan) protein is Calumenin (CALU).